We begin with the raw amino-acid sequence, 1370 residues long: DNA-directed RNA polymerase subunit beta (1370 aa).

This sequence belongs to the RNA polymerase beta chain family. The RNAP catalytic core consists of 2 alpha, 1 beta, 1 beta' and 1 omega subunit. When a sigma factor is associated with the core the holoenzyme is formed, which can initiate transcription.

The catalysed reaction is RNA(n) + a ribonucleoside 5'-triphosphate = RNA(n+1) + diphosphate. Its function is as follows. DNA-dependent RNA polymerase catalyzes the transcription of DNA into RNA using the four ribonucleoside triphosphates as substrates. The chain is DNA-directed RNA polymerase subunit beta from Bordetella parapertussis (strain 12822 / ATCC BAA-587 / NCTC 13253).